Here is a 688-residue protein sequence, read N- to C-terminus: G protein-coupled receptor kinase 3 (688 aa).

The tract at residues 1 to 190 is N-terminal; sequence MADLEAVLAD…ELNIHLSMND (190 aa). Positions 54–175 constitute an RGS domain; sequence TFDKIFNQKI…MESEKFTRFC (122 aa). The 263-residue stretch at 191–453 folds into the Protein kinase domain; that stretch reads FSVHRIIGRG…ARELKEHIFF (263 aa). ATP contacts are provided by residues 197–205 and Lys-220; that span reads IGRGGFGEV. Asp-317 serves as the catalytic Proton acceptor. An AGC-kinase C-terminal domain is found at 454–521; that stretch reads KGIDWQYVYL…MISERWQQEV (68 aa). The PH domain maps to 558–652; the sequence is DCIMHGYMLK…WLKELTCTFN (95 aa).

Belongs to the protein kinase superfamily. AGC Ser/Thr protein kinase family. GPRK subfamily. In terms of assembly, interacts with GIT1. In terms of processing, ubiquitinated. As to expression, expressed in brain cortex, hippocampus, striatum, hypothalamus, cerebellum and brainstem (at protein level).

The protein resides in the postsynapse. The protein localises to the presynapse. The catalysed reaction is [beta-adrenergic receptor] + ATP = [beta-adrenergic receptor]-phosphate + ADP + H(+). Specifically phosphorylates the agonist-occupied form of the beta-adrenergic and closely related receptors. In Rattus norvegicus (Rat), this protein is G protein-coupled receptor kinase 3.